Reading from the N-terminus, the 201-residue chain is Holliday junction resolvase RecU (201 aa).

Residues 1–26 (MAIGYPNGKKYAASQEELPQQKRKAP) form a disordered region. Residues T87, D89, E102, and Q121 each coordinate Mg(2+).

It belongs to the RecU family. Requires Mg(2+) as cofactor.

The protein resides in the cytoplasm. It carries out the reaction Endonucleolytic cleavage at a junction such as a reciprocal single-stranded crossover between two homologous DNA duplexes (Holliday junction).. In terms of biological role, endonuclease that resolves Holliday junction intermediates in genetic recombination. Cleaves mobile four-strand junctions by introducing symmetrical nicks in paired strands. Promotes annealing of linear ssDNA with homologous dsDNA. Required for DNA repair, homologous recombination and chromosome segregation. This chain is Holliday junction resolvase RecU, found in Listeria monocytogenes serotype 4a (strain HCC23).